Reading from the N-terminus, the 837-residue chain is Telomere length regulation protein TEL2 homolog (837 aa).

At M1 the chain carries N-acetylmethionine. 3 positions are modified to hydroxyproline: P374, P419, and P422. A disordered region spans residues 444 to 472 (QPAGDGASEAGTSLVPATAEPPAETPAEI). At S456 the chain carries Phosphoserine. Low complexity predominate over residues 459-471 (PATAEPPAETPAE). S485 carries the phosphoserine; by CK2 modification. Phosphoserine is present on residues S487 and S491. Residues 627-651 (GCLGRTPQPGSPSPNTPCLPEAAVS) are disordered. 2 positions are modified to phosphoserine: S688 and S836.

It belongs to the TEL2 family. Component of the TTT complex composed of TELO2, TTI1 and TTI2. Interacts with ATM, ATR, MTOR, PRKDC, RUVBL2, TTI1, TTI2, SMG1 and TRRAP. Component of the mTORC1 and mTORC2 complexes. Interacts (phosphorylated form) with PIH1D1 which mediates interaction of TELO2 with the R2TP complex composed of RUVBL1, RUVBL2, PIH1D1, and RPAP3. Post-translationally, hydroxylation by PHD3 is required for a proper interaction with ATR, and activation of the ATR/CHK1/p53 pathway following DNA damage. In terms of processing, phosphorylated at Ser-485 by CK2 following growth factor deprivation, leading to its subsequent ubiquitination by the SCF(FBXO9) complex. Phosphorylation by CK2 only takes place when TELO2 is bound to mTORC1, not mTORC2; leading to selective ubiquitination of mTORC1-associated protein. Ubiquitinated by the SCF(FBXO9) complex following phosphorylation by CK2 in response to growth factor deprivation, leading to its degradation by the proteasome. Only mTORC1-associated protein is ubiquitinated and degraded, leading to selective inactivation of mTORC1 to restrain cell growth and protein translation, while mTORC2 is activated due to the relief of feedback inhibition by mTORC1.

Its subcellular location is the cytoplasm. The protein localises to the membrane. It localises to the nucleus. The protein resides in the chromosome. It is found in the telomere. Its function is as follows. Regulator of the DNA damage response (DDR). Part of the TTT complex that is required to stabilize protein levels of the phosphatidylinositol 3-kinase-related protein kinase (PIKK) family proteins. The TTT complex is involved in the cellular resistance to DNA damage stresses, like ionizing radiation (IR), ultraviolet (UV) and mitomycin C (MMC). Together with the TTT complex and HSP90 may participate in the proper folding of newly synthesized PIKKs. Promotes assembly, stabilizes and maintains the activity of mTORC1 and mTORC2 complexes, which regulate cell growth and survival in response to nutrient and hormonal signals. May be involved in telomere length regulation. This chain is Telomere length regulation protein TEL2 homolog (TELO2), found in Homo sapiens (Human).